The sequence spans 727 residues: NHL repeat-containing protein 2 (727 aa).

The Thioredoxin domain maps to 43–198 (RERDLTVPEL…TLKFYKERGQ (156 aa)). 6 NHL repeats span residues 207 to 249 (KLYK…TLKN), 260 to 302 (NSGR…IDLE), 330 to 364 (ISSPWDVVFGNSVSGTQEDDVLWIAMAGIHQVWAL), 404 to 434 (FAQPSGLSLASEEPWNCLFVADSESSTVRMI), 456 to 500 (AFGD…VDPK), and 513 to 557 (ASNV…LDLE).

As to quaternary structure, monomer.

The protein resides in the cytoplasm. It is found in the cytosol. In terms of biological role, required for normal embryonic development. The protein is NHL repeat-containing protein 2 (NHLRC2) of Gallus gallus (Chicken).